Consider the following 88-residue polypeptide: Kunitz-type kappaPI-theraphotoxin-Hs1a (88 aa).

Residues Met-1–Ala-27 form the signal peptide. The propeptide occupies Asp-28–Arg-33. Positions Cys-37–Cys-85 constitute a BPTI/Kunitz inhibitor domain. 3 disulfides stabilise this stretch: Cys-37–Cys-85, Cys-46–Cys-68, and Cys-60–Cys-81.

Belongs to the venom Kunitz-type family. 02 (native) subfamily. As to expression, expressed by the venom gland.

Its subcellular location is the secreted. Its function is as follows. Serine protease inhibitor that inhibits trypsin (Ki=5.54 uM) at a molar ratio of 1:1. In Cyriopagopus schmidti (Chinese bird spider), this protein is Kunitz-type kappaPI-theraphotoxin-Hs1a.